A 190-amino-acid polypeptide reads, in one-letter code: Putative manganese efflux pump MntP (190 aa).

6 consecutive transmembrane segments (helical) span residues alanine 5–glycine 25, tryptophan 41–isoleucine 61, phenylalanine 64–methionine 84, threonine 105–leucine 125, methionine 127–threonine 147, and isoleucine 169–phenylalanine 189.

Belongs to the MntP (TC 9.B.29) family.

It localises to the cell inner membrane. Functionally, probably functions as a manganese efflux pump. This is Putative manganese efflux pump MntP from Oleidesulfovibrio alaskensis (strain ATCC BAA-1058 / DSM 17464 / G20) (Desulfovibrio alaskensis).